The following is a 324-amino-acid chain: Beta-ketoacyl-[acyl-carrier-protein] synthase III (324 aa).

Active-site residues include C112 and H249. The segment at 250 to 254 (QANRR) is ACP-binding. The active site involves N279.

Belongs to the thiolase-like superfamily. FabH family. In terms of assembly, homodimer.

Its subcellular location is the cytoplasm. It catalyses the reaction malonyl-[ACP] + acetyl-CoA + H(+) = 3-oxobutanoyl-[ACP] + CO2 + CoA. Its pathway is lipid metabolism; fatty acid biosynthesis. Catalyzes the condensation reaction of fatty acid synthesis by the addition to an acyl acceptor of two carbons from malonyl-ACP. Catalyzes the first condensation reaction which initiates fatty acid synthesis and may therefore play a role in governing the total rate of fatty acid production. Possesses both acetoacetyl-ACP synthase and acetyl transacylase activities. Its substrate specificity determines the biosynthesis of branched-chain and/or straight-chain of fatty acids. This Streptococcus equi subsp. zooepidemicus (strain H70) protein is Beta-ketoacyl-[acyl-carrier-protein] synthase III.